Here is a 505-residue protein sequence, read N- to C-terminus: 4-alpha-glucanotransferase (505 aa).

Belongs to the disproportionating enzyme family.

The protein resides in the cytoplasm. The catalysed reaction is Transfers a segment of a (1-&gt;4)-alpha-D-glucan to a new position in an acceptor, which may be glucose or a (1-&gt;4)-alpha-D-glucan.. The chain is 4-alpha-glucanotransferase (malQ) from Streptococcus pneumoniae serotype 4 (strain ATCC BAA-334 / TIGR4).